The sequence spans 387 residues: Pepsin A-5 (387 aa).

Residues 1–15 (MKWLWVLGLVALSEC) form the signal peptide. Residues 16–62 (LVKIPLMKIKSMRENLRESQVLKDYLEKYPRSRAHVLLEQRRNPAVT) constitute a propeptide, activation peptide. The Peptidase A1 domain maps to 74-384 (YIGIISIGTP…DRANNRIGLA (311 aa)). Asp92 is an active-site residue. 2 disulfides stabilise this stretch: Cys105–Cys110 and Cys266–Cys270. Residue Asp275 is part of the active site. Cys309 and Cys343 are joined by a disulfide.

Belongs to the peptidase A1 family. As to expression, expressed in glandular chief cells of the neonatal stomach. Expressed in yolk sacs of the placenta (at protein level).

The protein localises to the secreted. The catalysed reaction is Preferential cleavage: hydrophobic, preferably aromatic, residues in P1 and P1' positions. Cleaves 1-Phe-|-Val-2, 4-Gln-|-His-5, 13-Glu-|-Ala-14, 14-Ala-|-Leu-15, 15-Leu-|-Tyr-16, 16-Tyr-|-Leu-17, 23-Gly-|-Phe-24, 24-Phe-|-Phe-25 and 25-Phe-|-Tyr-26 bonds in the B chain of insulin.. Inhibited by pepstatin A. Its function is as follows. Shows particularly broad specificity; although bonds involving phenylalanine and leucine are preferred, many others are also cleaved to some extent. May play a role as a specialized neonatal digestive enzyme. This chain is Pepsin A-5, found in Mus musculus (Mouse).